Consider the following 373-residue polypeptide: STE20-related kinase adapter protein alpha (373 aa).

Positions 11-321 constitute a Protein kinase domain; that stretch reads YELLTVIGKG…ASTLLNHSFF (311 aa). Positions 255–281 are enriched in polar residues; sequence STSRSAANSGLSESLAPSTPRTSNGDS. Residues 255–288 form a disordered region; sequence STSRSAANSGLSESLAPSTPRTSNGDSPSHPYHR. A Phosphothreonine; by LKB1 modification is found at T361.

It belongs to the protein kinase superfamily. STE Ser/Thr protein kinase family. STE20 subfamily. As to quaternary structure, component of a trimeric complex composed of STK11/LKB1, STRAD (STRADA or STRADB) and CAB39/MO25 (CAB39/MO25alpha or CAB39L/MO25beta): the complex tethers STK11/LKB1 in the cytoplasm and stimulates its catalytic activity.

Its subcellular location is the nucleus. It is found in the cytoplasm. Functionally, pseudokinase which, in complex with CAB39/MO25 (CAB39/MO25alpha or CAB39L/MO25beta), binds to and activates STK11/LKB1. Adopts a closed conformation typical of active protein kinases and binds STK11/LKB1 as a pseudosubstrate, promoting conformational change of STK11/LKB1 in an active conformation. The polypeptide is STE20-related kinase adapter protein alpha (STRADA) (Bos taurus (Bovine)).